A 225-amino-acid polypeptide reads, in one-letter code: UPF0173 metal-dependent hydrolase Tneu_1348 (225 aa).

The protein belongs to the UPF0173 family.

This is UPF0173 metal-dependent hydrolase Tneu_1348 from Pyrobaculum neutrophilum (strain DSM 2338 / JCM 9278 / NBRC 100436 / V24Sta) (Thermoproteus neutrophilus).